The chain runs to 235 residues: Transmembrane protein 215 (235 aa).

Transmembrane regions (helical) follow at residues 12-32 (LVVALVSVFLVFGFMFTVSGM) and 40-60 (IPLLAIGPAICLPGIAAIALA). The tract at residues 99 to 146 (SDLESGKGSSDELAKKAGLRGKQLPQGPGEVPMASSVTTPTPTEEGEC) is disordered.

The protein localises to the membrane. The chain is Transmembrane protein 215 (Tmem215) from Mus musculus (Mouse).